We begin with the raw amino-acid sequence, 463 residues long: ATP-dependent protease ATPase subunit HslU (463 aa).

ATP is bound by residues I19, 61-66, D277, E341, and R413; that span reads GVGKTE.

This sequence belongs to the ClpX chaperone family. HslU subfamily. As to quaternary structure, a double ring-shaped homohexamer of HslV is capped on each side by a ring-shaped HslU homohexamer. The assembly of the HslU/HslV complex is dependent on binding of ATP.

The protein resides in the cytoplasm. ATPase subunit of a proteasome-like degradation complex; this subunit has chaperone activity. The binding of ATP and its subsequent hydrolysis by HslU are essential for unfolding of protein substrates subsequently hydrolyzed by HslV. HslU recognizes the N-terminal part of its protein substrates and unfolds these before they are guided to HslV for hydrolysis. This chain is ATP-dependent protease ATPase subunit HslU, found in Bacillus cereus (strain 03BB102).